A 127-amino-acid polypeptide reads, in one-letter code: Large ribosomal subunit protein bL20 (127 aa).

This sequence belongs to the bacterial ribosomal protein bL20 family.

Functionally, binds directly to 23S ribosomal RNA and is necessary for the in vitro assembly process of the 50S ribosomal subunit. It is not involved in the protein synthesizing functions of that subunit. This Bifidobacterium animalis subsp. lactis (strain AD011) protein is Large ribosomal subunit protein bL20.